A 253-amino-acid polypeptide reads, in one-letter code: VTSITLDLVNPTAGQYSSFVDKIRNNVKDPNLKYGGTDIAVIGPPSKDKFLRINFQSSRGTVSLGLKRDNLYVVAYLAMDNTNVNRAYYFRSEITSAELTALFPEATAANHKALEYTEDYHSIEKNAQITEGDKSRKELGLGINLLSSTMDTVNKKVRVVKNEARFLLIAIQMTAEAVRFRYIQNLVTKNFPNKFNSENKVIKFEVNWKKISTAIHGDAKNGVFNKDYDFGFGKVRLVKDLQMGLLMHLGKPK.

Residue E176 is part of the active site.

It carries out the reaction Endohydrolysis of the N-glycosidic bond at one specific adenosine on the 28S rRNA.. Ribosome-inactivating protein of type 1, inhibits protein synthesis in animal cells. This Saponaria officinalis (Common soapwort) protein is Ribosome-inactivating protein saporin-9 (SAP9).